The primary structure comprises 254 residues: Small ribosomal subunit protein uS5 (254 aa).

The segment covering 1–10 has biased composition (polar residues); sequence MSAPEAQQQK. Residues 1-34 are disordered; that stretch reads MSAPEAQQQKRGGFGGRNRGRPNRRGPRNTEEKG. Residue Ser2 is modified to N-acetylserine. Arg11 bears the Asymmetric dimethylarginine; by HMT1; alternate mark. Residue Arg11 is modified to Omega-N-methylarginine; by HMT1; alternate. Residue Arg17 is modified to Omega-N-methylarginine; by HMT1. Residues 18–27 are compositionally biased toward basic residues; it reads NRGRPNRRGP. Lys33 is covalently cross-linked (Glycyl lysine isopeptide (Lys-Gly) (interchain with G-Cter in ubiquitin)). The 64-residue stretch at 76 to 139 folds into the S5 DRBM domain; sequence LQDEVMNIKP…IIAKLSVIPI (64 aa).

Belongs to the universal ribosomal protein uS5 family. As to quaternary structure, component of the small ribosomal subunit (SSU). Mature yeast ribosomes consist of a small (40S) and a large (60S) subunit. The 40S small subunit contains 1 molecule of ribosomal RNA (18S rRNA) and 33 different proteins (encoded by 57 genes). The large 60S subunit contains 3 rRNA molecules (25S, 5.8S and 5S rRNA) and 46 different proteins (encoded by 81 genes). Interacts with snoRNA U3. Interacts with MPP10. Component of the ribosomal small subunit (SSU) processome composed of at least 40 protein subunits and snoRNA U3. In terms of processing, N-terminally acetylated by acetyltransferase NatA.

The protein localises to the cytoplasm. It is found in the nucleus. Its subcellular location is the nucleolus. Its function is as follows. Component of the ribosome, a large ribonucleoprotein complex responsible for the synthesis of proteins in the cell. The small ribosomal subunit (SSU) binds messenger RNAs (mRNAs) and translates the encoded message by selecting cognate aminoacyl-transfer RNA (tRNA) molecules. The large subunit (LSU) contains the ribosomal catalytic site termed the peptidyl transferase center (PTC), which catalyzes the formation of peptide bonds, thereby polymerizing the amino acids delivered by tRNAs into a polypeptide chain. The nascent polypeptides leave the ribosome through a tunnel in the LSU and interact with protein factors that function in enzymatic processing, targeting, and the membrane insertion of nascent chains at the exit of the ribosomal tunnel. uS5 is important for the assembly and function of the 40S ribosomal subunit. Mutations in this protein affects the control of translational fidelity. Involved in nucleolar processing of pre-18S ribosomal RNA and ribosome assembly. The sequence is that of Small ribosomal subunit protein uS5 from Saccharomyces cerevisiae (strain ATCC 204508 / S288c) (Baker's yeast).